The primary structure comprises 257 residues: Large ribosomal subunit protein uL2 (257 aa).

The disordered stretch occupies residues 207-230 (VEHPFGGGNHQHIGKPSTIRRDAP).

It belongs to the universal ribosomal protein uL2 family. As to quaternary structure, component of the large ribosomal subunit.

The protein localises to the cytoplasm. Component of the large ribosomal subunit. The ribosome is a large ribonucleoprotein complex responsible for the synthesis of proteins in the cell. The sequence is that of Large ribosomal subunit protein uL2 (rpl8) from Danio rerio (Zebrafish).